A 265-amino-acid chain; its full sequence is Palmitoyltransferase ZDHHC21 (265 aa).

Residues 1-16 are Cytoplasmic-facing; it reads MGLRIHFVVDPHGWCC. Residues 17-37 traverse the membrane as a helical segment; that stretch reads MGLIVFVWLYNIVIIPKIVLF. At 38–44 the chain is on the extracellular side; sequence PHYEEGH. The chain crosses the membrane as a helical span at residues 45–65; it reads IPGILIIIFYGISIFCLVALV. Topologically, residues 66-133 are cytoplasmic; sequence RASLTDPGRL…NNCVGEDNHW (68 aa). Residues 90-140 enclose the DHHC domain; the sequence is ELCNKCNLMRPKRSHHCSRCGHCVRRMDHHCPWINNCVGEDNHWLFLQLCF. The active-site S-palmitoyl cysteine intermediate is the C120. A helical transmembrane segment spans residues 134-154; the sequence is LFLQLCFYTELLTCYALMFSF. The Extracellular segment spans residues 155–185; sequence CHYYYFLPLKKRNLDLFVVRHELAIMRLAAF. A helical transmembrane segment spans residues 186–206; sequence MGITMLVGITGLFYTQLIGII. Residues 207-265 are Cytoplasmic-facing; that stretch reads TDTTSIEKMSNCCEEISRPRKPWQQTFSEVFGTRWKILWFIPFRQRQPLRVPYHFANHV.

This sequence belongs to the DHHC palmitoyltransferase family. Widely expressed. Expressed in Henle's layer within the hair bulb and the hair shaft cuticle (at protein level). Expression is limited to the post-mitotic lineages of inner root sheath (IRS) and cuticle.

It is found in the golgi apparatus membrane. The protein resides in the golgi apparatus. It localises to the cis-Golgi network membrane. The protein localises to the cell membrane. The catalysed reaction is L-cysteinyl-[protein] + hexadecanoyl-CoA = S-hexadecanoyl-L-cysteinyl-[protein] + CoA. Functionally, palmitoyltransferase that catalyzes the addition of palmitate onto various protein substrates. Palmitoylates sex steroid hormone receptors, including ESR1, PGR and AR, thereby regulating their targeting to the plasma membrane. This affects rapid intracellular signaling by sex hormones via ERK and AKT kinases and the generation of cAMP, but does not affect that mediated by their nuclear receptor. Palmitoylates FYN, regulates its localization in hair follicles and plays a key role in epidermal homeostasis and hair follicle differentiation. Through the palmitoylation of PLCB1 and the regulation of PLCB1 downstream signaling may indirectly regulate the function of the endothelial barrier and the adhesion of leukocytes to the endothelium. Also has a palmitoyltransferase activity toward ADRA1D, positively regulating its activity and expression and may thereby play a role in vascular contraction. May also palmitoylate eNOS and LCK. In Mus musculus (Mouse), this protein is Palmitoyltransferase ZDHHC21.